The sequence spans 254 residues: Transmembrane protein 269 (254 aa).

Transmembrane regions (helical) follow at residues 44–64 (IINA…FCSF), 69–89 (YCAS…GTMT), 113–135 (LASA…IYVL), 171–191 (LTKG…LFMI), and 210–230 (IVYI…TAFY).

Its subcellular location is the membrane. The sequence is that of Transmembrane protein 269 from Mus musculus (Mouse).